Consider the following 73-residue polypeptide: Cell division protein ZapB (73 aa).

The stretch at 3-69 forms a coiled coil; it reads LELLSKLETK…EKVTGLVGLL (67 aa). The disordered stretch occupies residues 30-50; it reads EKQKSSTLSEHNQQLNEQNQQ. Low complexity predominate over residues 41 to 50; the sequence is NQQLNEQNQQ.

This sequence belongs to the ZapB family. Homodimer. The ends of the coiled-coil dimer bind to each other, forming polymers. Interacts with FtsZ.

Its subcellular location is the cytoplasm. Its function is as follows. Non-essential, abundant cell division factor that is required for proper Z-ring formation. It is recruited early to the divisome by direct interaction with FtsZ, stimulating Z-ring assembly and thereby promoting cell division earlier in the cell cycle. Its recruitment to the Z-ring requires functional FtsA or ZipA. In Shewanella putrefaciens (strain CN-32 / ATCC BAA-453), this protein is Cell division protein ZapB.